The following is a 252-amino-acid chain: Iron-sulfur cluster co-chaperone protein HscB homolog (252 aa).

The transit peptide at Met-1 to Phe-59 directs the protein to the mitochondrion. The region spanning Asp-93–Leu-165 is the J domain.

The protein belongs to the HscB family. In terms of assembly, interacts with ISU1 and HSP70-9/HSCA1.

The protein resides in the mitochondrion. Its subcellular location is the cytoplasm. It is found in the cytosol. Functionally, co-chaperone required for the assembly of iron-sulfur [Fe-S] clusters in both mitochondria and cytosol. Required for the activity of iron-sulfur proteins such as aconitase and succinate dehydrogenase. Involved in iron homeostasis and may take part in the control of iron translocation from roots to shoots. The polypeptide is Iron-sulfur cluster co-chaperone protein HscB homolog (Arabidopsis thaliana (Mouse-ear cress)).